The chain runs to 336 residues: Protein ABHD13 (336 aa).

A helical; Signal-anchor for type II membrane protein transmembrane segment spans residues 37–57 (FNMYGGVILLLLIFVSIAGIL). Catalysis depends on charge relay system residues S193, D268, and H298. N-linked (GlcNAc...) asparagine glycosylation is present at N299.

Belongs to the serine esterase family.

Its subcellular location is the membrane. The chain is Protein ABHD13 from Xenopus laevis (African clawed frog).